The sequence spans 604 residues: Elongation factor 4 (604 aa).

Residues 10–191 (KNIRNFSIIA…KIITTIPAPS (182 aa)) enclose the tr-type G domain. Residues 22 to 27 (DHGKST) and 138 to 141 (NKID) contribute to the GTP site.

The protein belongs to the TRAFAC class translation factor GTPase superfamily. Classic translation factor GTPase family. LepA subfamily.

The protein resides in the cell inner membrane. It catalyses the reaction GTP + H2O = GDP + phosphate + H(+). Its function is as follows. Required for accurate and efficient protein synthesis under certain stress conditions. May act as a fidelity factor of the translation reaction, by catalyzing a one-codon backward translocation of tRNAs on improperly translocated ribosomes. Back-translocation proceeds from a post-translocation (POST) complex to a pre-translocation (PRE) complex, thus giving elongation factor G a second chance to translocate the tRNAs correctly. Binds to ribosomes in a GTP-dependent manner. This is Elongation factor 4 from Helicobacter pylori (strain P12).